The sequence spans 126 residues: Aspartate 1-decarboxylase (126 aa).

Residue S25 is the Schiff-base intermediate with substrate; via pyruvic acid of the active site. At S25 the chain carries Pyruvic acid (Ser). T57 is a binding site for substrate. The active-site Proton donor is the Y58. Substrate is bound at residue 73–75 (GAA).

Belongs to the PanD family. In terms of assembly, heterooctamer of four alpha and four beta subunits. Pyruvate is required as a cofactor. In terms of processing, is synthesized initially as an inactive proenzyme, which is activated by self-cleavage at a specific serine bond to produce a beta-subunit with a hydroxyl group at its C-terminus and an alpha-subunit with a pyruvoyl group at its N-terminus.

Its subcellular location is the cytoplasm. The enzyme catalyses L-aspartate + H(+) = beta-alanine + CO2. Its pathway is cofactor biosynthesis; (R)-pantothenate biosynthesis; beta-alanine from L-aspartate: step 1/1. Its function is as follows. Catalyzes the pyruvoyl-dependent decarboxylation of aspartate to produce beta-alanine. The sequence is that of Aspartate 1-decarboxylase from Psychromonas ingrahamii (strain DSM 17664 / CCUG 51855 / 37).